The chain runs to 348 residues: MDFRNVQLPREIHSGSGIIEEIGDVCDNLLPKKDVTILTGPTTKKIAGNHVIEILKESNYEISEITVNLATEESVEEVVKDSKDSSAILGVGGGKVIDVAKMASTINHIPLISVPTTAAHDGMASPRASIKNDKGTVSLKANAPFALIADTTIISQAPYRFTAAGFSDIISNLTAVEDWKLAYKLINEPFSDSAAALSVMTAKLLIDEADNIHPNNENSASVVVKGLISSGMAISIAGNSRPASGSEHKFSHALDMIAPKPALHGEQCGVGTIMMMYLQGGDWQNIKSVLEKVNAPTTAKELGIDEEYIIEALIQAHNIRKERYTILGDRGLTREAAENIALKTHVIE.

NAD(+)-binding positions include 94–98 (GKVID) and Thr-116. Residue Asp-121 participates in substrate binding. Ser-125 is an NAD(+) binding site. Asp-168 lines the substrate pocket. The Zn(2+) site is built by Asp-168 and His-248. His-252 contacts substrate. Position 264 (His-264) interacts with Zn(2+).

This sequence belongs to the glycerol-1-phosphate dehydrogenase family. Homooctamer. The cofactor is Zn(2+).

It localises to the cytoplasm. It catalyses the reaction sn-glycerol 1-phosphate + NAD(+) = dihydroxyacetone phosphate + NADH + H(+). It carries out the reaction sn-glycerol 1-phosphate + NADP(+) = dihydroxyacetone phosphate + NADPH + H(+). It functions in the pathway membrane lipid metabolism; glycerophospholipid metabolism. Its function is as follows. Catalyzes the NAD(P)H-dependent reduction of dihydroxyacetonephosphate (DHAP or glycerone phosphate) to glycerol 1-phosphate (G1P). The G1P thus generated is used as the glycerophosphate backbone of phospholipids in the cellular membranes of Archaea. This Methanosphaera stadtmanae (strain ATCC 43021 / DSM 3091 / JCM 11832 / MCB-3) protein is Glycerol-1-phosphate dehydrogenase [NAD(P)+].